The following is a 340-amino-acid chain: Glycerol-3-phosphate dehydrogenase [NAD(P)+] (340 aa).

Residues Ser14, Phe15, Arg35, and Lys108 each contribute to the NADPH site. Sn-glycerol 3-phosphate contacts are provided by Lys108 and Gly136. Ala140 contacts NADPH. Lys191, Asp244, Ser254, Arg255, and Asn256 together coordinate sn-glycerol 3-phosphate. The active-site Proton acceptor is Lys191. Arg255 contributes to the NADPH binding site. Val279 and Glu281 together coordinate NADPH.

Belongs to the NAD-dependent glycerol-3-phosphate dehydrogenase family.

Its subcellular location is the cytoplasm. It carries out the reaction sn-glycerol 3-phosphate + NAD(+) = dihydroxyacetone phosphate + NADH + H(+). The enzyme catalyses sn-glycerol 3-phosphate + NADP(+) = dihydroxyacetone phosphate + NADPH + H(+). It functions in the pathway membrane lipid metabolism; glycerophospholipid metabolism. Functionally, catalyzes the reduction of the glycolytic intermediate dihydroxyacetone phosphate (DHAP) to sn-glycerol 3-phosphate (G3P), the key precursor for phospholipid synthesis. The sequence is that of Glycerol-3-phosphate dehydrogenase [NAD(P)+] from Azotobacter vinelandii (strain DJ / ATCC BAA-1303).